The sequence spans 213 residues: Pyridoxine/pyridoxamine 5'-phosphate oxidase (213 aa).

Residues 8 to 11 (RREY) and K66 contribute to the substrate site. Residues 61–66 (RIVLLK), 76–77 (YT), R82, K83, and Q105 contribute to the FMN site. Residues Y123, R127, and S131 each contribute to the substrate site. FMN-binding positions include 140 to 141 (QS) and W185. Residue 191 to 193 (RLH) participates in substrate binding. R195 contacts FMN.

Belongs to the pyridoxamine 5'-phosphate oxidase family. Homodimer. It depends on FMN as a cofactor.

It carries out the reaction pyridoxamine 5'-phosphate + O2 + H2O = pyridoxal 5'-phosphate + H2O2 + NH4(+). The catalysed reaction is pyridoxine 5'-phosphate + O2 = pyridoxal 5'-phosphate + H2O2. Its pathway is cofactor metabolism; pyridoxal 5'-phosphate salvage; pyridoxal 5'-phosphate from pyridoxamine 5'-phosphate: step 1/1. The protein operates within cofactor metabolism; pyridoxal 5'-phosphate salvage; pyridoxal 5'-phosphate from pyridoxine 5'-phosphate: step 1/1. In terms of biological role, catalyzes the oxidation of either pyridoxine 5'-phosphate (PNP) or pyridoxamine 5'-phosphate (PMP) into pyridoxal 5'-phosphate (PLP). The sequence is that of Pyridoxine/pyridoxamine 5'-phosphate oxidase from Pseudoalteromonas atlantica (strain T6c / ATCC BAA-1087).